A 301-amino-acid polypeptide reads, in one-letter code: Ornithine carbamoyltransferase (301 aa).

Carbamoyl phosphate-binding positions include 47–50 (STRT), glutamine 74, arginine 98, and 125–128 (HPCQ). Residues asparagine 156, aspartate 220, and 224–225 (SM) each bind L-ornithine. Residues 260-261 (CL) and arginine 288 contribute to the carbamoyl phosphate site.

This sequence belongs to the aspartate/ornithine carbamoyltransferase superfamily. OTCase family.

It localises to the cytoplasm. It catalyses the reaction carbamoyl phosphate + L-ornithine = L-citrulline + phosphate + H(+). The protein operates within amino-acid biosynthesis; L-arginine biosynthesis; L-arginine from L-ornithine and carbamoyl phosphate: step 1/3. Reversibly catalyzes the transfer of the carbamoyl group from carbamoyl phosphate (CP) to the N(epsilon) atom of ornithine (ORN) to produce L-citrulline. The polypeptide is Ornithine carbamoyltransferase (Methanobrevibacter smithii (strain ATCC 35061 / DSM 861 / OCM 144 / PS)).